Reading from the N-terminus, the 1006-residue chain is Probable beta-galactosidase A (1006 aa).

An N-terminal signal peptide occupies residues 1–18; the sequence is MKLLSVCAIALLAAQAAG. The substrate site is built by Tyr-96, Asn-140, Ala-141, and Glu-142. A glycan (N-linked (GlcNAc...) asparagine) is linked at Asn-156. Residue Asn-199 coordinates substrate. Glu-200 (proton donor) is an active-site residue. Cys-205 and Cys-206 are oxidised to a cystine. Residue Tyr-260 coordinates substrate. Cys-266 and Cys-315 are oxidised to a cystine. Glu-298 functions as the Nucleophile in the catalytic mechanism. Tyr-364 is a binding site for substrate. N-linked (GlcNAc...) asparagine glycosylation is found at Asn-373, Asn-402, Asn-422, Asn-622, Asn-760, Asn-777, and Asn-914.

It belongs to the glycosyl hydrolase 35 family.

It is found in the secreted. It catalyses the reaction Hydrolysis of terminal non-reducing beta-D-galactose residues in beta-D-galactosides.. Cleaves beta-linked terminal galactosyl residues from gangliosides, glycoproteins, and glycosaminoglycans. The polypeptide is Probable beta-galactosidase A (lacA) (Aspergillus fumigatus (strain ATCC MYA-4609 / CBS 101355 / FGSC A1100 / Af293) (Neosartorya fumigata)).